A 257-amino-acid polypeptide reads, in one-letter code: MTDRQGLLTDRIALITGASSGIGAAQRGLFAREGAAVVVTARREERLAGLVDELRAQGARAAYVVADVTRSEDAVRAVEFTVERFGRLDAAFNKRRHGAGRTPLHLMDDPVYDDIMDTNVRGVFNCLRPEIAAMLASGAGGSIVNTSSTGGLVATPVAAPYVVSKHAVLGLTKGPAAEYGAHGIRVNAIAPGTTRSEMVADWFAQNPDAEELLHRATPQPRTAEPQEIAEAAAWLCSERASFVTGSTLVVDGGFTIL.

Tyr-161 (proton acceptor) is an active-site residue.

This sequence belongs to the short-chain dehydrogenases/reductases (SDR) family. Homodimer.

It carries out the reaction a (3R,4R)-3-[(1S)-1-hydroxyalkyl]-4-(hydroxymethyl)oxolan-2-one + NADP(+) = a (3R,4R)-3-alkanoyl-4-(hydroxymethyl)oxolan-2-one + NADPH + H(+). Its function is as follows. Involved in the biosynthesis of virginiae butanolide (VB), which regulates the production of antibiotic virginiamycin. Catalyzes the reduction of 6-dehydro-VB-A to VB-A, the last catalytic step in VB biosynthesis. In vitro, can use various synthetic A-factor-type analogs. This chain is A-factor type gamma-butyrolactone 1'-reductase (1S-forming), found in Streptomyces virginiae (Streptomyces cinnamonensis).